The following is a 1201-amino-acid chain: Protein dduB (1201 aa).

An N-terminal signal peptide occupies residues 1–22 (MKFIKYLLILFLILKINYFVES). At 23 to 1180 (GVDCQKNTEY…QDPSDELSTS (1158 aa)) the chain is on the extracellular side. N-linked (GlcNAc...) asparagine glycosylation is found at Asn68, Asn122, Asn150, Asn185, Asn283, Asn348, Asn360, Asn437, Asn448, Asn518, Asn535, Asn554, Asn585, Asn631, Asn759, Asn815, Asn830, Asn844, Asn946, Asn1042, Asn1058, Asn1098, and Asn1108. The chain crosses the membrane as a helical span at residues 1181 to 1201 (SFIQLNILSLLLISIFTIFIL).

It localises to the membrane. This is Protein dduB (dduB) from Dictyostelium discoideum (Social amoeba).